A 675-amino-acid chain; its full sequence is DNA ligase 1 (675 aa).

NAD(+) is bound by residues 34-38 (DFEYD), 83-84 (SL), and glutamate 114. Residue lysine 116 is the N6-AMP-lysine intermediate of the active site. NAD(+) contacts are provided by arginine 137, glutamate 177, lysine 295, and lysine 319. 4 residues coordinate Zn(2+): cysteine 413, cysteine 416, cysteine 431, and cysteine 436. The region spanning 596–675 (NSGSALAGKT…AEFLRLLSGG (80 aa)) is the BRCT domain.

The protein belongs to the NAD-dependent DNA ligase family. LigA subfamily. It depends on Mg(2+) as a cofactor. Mn(2+) serves as cofactor.

The catalysed reaction is NAD(+) + (deoxyribonucleotide)n-3'-hydroxyl + 5'-phospho-(deoxyribonucleotide)m = (deoxyribonucleotide)n+m + AMP + beta-nicotinamide D-nucleotide.. In terms of biological role, DNA ligase that catalyzes the formation of phosphodiester linkages between 5'-phosphoryl and 3'-hydroxyl groups in double-stranded DNA using NAD as a coenzyme and as the energy source for the reaction. It is essential for DNA replication and repair of damaged DNA. The chain is DNA ligase 1 from Opitutus terrae (strain DSM 11246 / JCM 15787 / PB90-1).